The following is a 454-amino-acid chain: CCA-adding enzyme (454 aa).

ATP-binding residues include Ser59 and Arg62. Ser59 and Arg62 together coordinate CTP. Residues Asp71, Asp73, and Asp125 each contribute to the Mg(2+) site. 3 residues coordinate ATP: His148, Lys167, and Tyr176. CTP-binding residues include His148, Lys167, and Tyr176.

The protein belongs to the tRNA nucleotidyltransferase/poly(A) polymerase family. Archaeal CCA-adding enzyme subfamily. In terms of assembly, homodimer. Mg(2+) serves as cofactor.

It carries out the reaction a tRNA precursor + 2 CTP + ATP = a tRNA with a 3' CCA end + 3 diphosphate. It catalyses the reaction a tRNA with a 3' CCA end + 2 CTP + ATP = a tRNA with a 3' CCACCA end + 3 diphosphate. Functionally, catalyzes the addition and repair of the essential 3'-terminal CCA sequence in tRNAs without using a nucleic acid template. Adds these three nucleotides in the order of C, C, and A to the tRNA nucleotide-73, using CTP and ATP as substrates and producing inorganic pyrophosphate. tRNA 3'-terminal CCA addition is required both for tRNA processing and repair. Also involved in tRNA surveillance by mediating tandem CCA addition to generate a CCACCA at the 3' terminus of unstable tRNAs. While stable tRNAs receive only 3'-terminal CCA, unstable tRNAs are marked with CCACCA and rapidly degraded. The sequence is that of CCA-adding enzyme from Methanosarcina mazei (strain ATCC BAA-159 / DSM 3647 / Goe1 / Go1 / JCM 11833 / OCM 88) (Methanosarcina frisia).